We begin with the raw amino-acid sequence, 499 residues long: Probable alpha-L-arabinofuranosidase B (499 aa).

Positions 1–17 are cleaved as a signal peptide; sequence MFSRRNLLALGLAATVS. Residues 18–335 are catalytic; it reads AGPCDIYEAG…ENIVAAKYVV (318 aa). 3 disulfides stabilise this stretch: Cys-21/Cys-31, Cys-81/Cys-86, and Cys-176/Cys-177. Asn-83 carries N-linked (GlcNAc...) asparagine glycosylation. Asn-202 carries N-linked (GlcNAc...) asparagine glycosylation. Asp-219 is a substrate binding site. The active-site Nucleophile is the Glu-221. Positions 222, 223, 296, 416, 418, 419, 435, 463, 465, 468, and 488 each coordinate substrate. Residues 336–499 are ABD; sequence GSLVSGPSFT…SFEIETAFAS (164 aa). Cys-401 and Cys-439 are joined by a disulfide.

It belongs to the glycosyl hydrolase 54 family.

Its subcellular location is the secreted. It catalyses the reaction Hydrolysis of terminal non-reducing alpha-L-arabinofuranoside residues in alpha-L-arabinosides.. The protein operates within glycan metabolism; L-arabinan degradation. Functionally, alpha-L-arabinofuranosidase involved in the degradation of arabinoxylan, a major component of plant hemicellulose. Able to hydrolyze 1,5-, 1,3- and 1,2-alpha-linkages not only in L-arabinofuranosyl oligosaccharides, but also in polysaccharides containing terminal non-reducing L-arabinofuranoses in side chains, like L-arabinan, arabinogalactan and arabinoxylan. This is Probable alpha-L-arabinofuranosidase B (abfB) from Aspergillus awamori (Black koji mold).